Reading from the N-terminus, the 842-residue chain is Protein translocase subunit SecA (842 aa).

ATP-binding positions include glutamine 85, 103 to 107 (GEGKT), and aspartate 493. 4 residues coordinate Zn(2+): cysteine 825, cysteine 827, cysteine 836, and histidine 837.

The protein belongs to the SecA family. As to quaternary structure, monomer and homodimer. Part of the essential Sec protein translocation apparatus which comprises SecA, SecYEG and auxiliary proteins SecDF. Other proteins may also be involved. It depends on Zn(2+) as a cofactor.

It localises to the cell membrane. The protein localises to the cytoplasm. The enzyme catalyses ATP + H2O + cellular proteinSide 1 = ADP + phosphate + cellular proteinSide 2.. Its function is as follows. Part of the Sec protein translocase complex. Interacts with the SecYEG preprotein conducting channel. Has a central role in coupling the hydrolysis of ATP to the transfer of proteins into and across the cell membrane, serving as an ATP-driven molecular motor driving the stepwise translocation of polypeptide chains across the membrane. This is Protein translocase subunit SecA from Streptococcus equi subsp. zooepidemicus (strain MGCS10565).